Reading from the N-terminus, the 260-residue chain is Tropinone reductase 2 (260 aa).

Residue 18 to 41 (SRGIGYGIVEELASLGASVYTCSR) coordinates NADP(+). Ser146 lines the substrate pocket. The active-site Proton acceptor is the Tyr159. 192-196 (IATSL) serves as a coordination point for NADP(+).

It belongs to the short-chain dehydrogenases/reductases (SDR) family. As to quaternary structure, homodimer.

It catalyses the reaction pseudotropine + NADP(+) = tropinone + NADPH + H(+). It functions in the pathway alkaloid biosynthesis; tropane alkaloid biosynthesis. Catalyzes the stereospecific reduction of tropinone to pseudotropine. The polypeptide is Tropinone reductase 2 (TR2) (Datura stramonium (Jimsonweed)).